The chain runs to 212 residues: Ras-related protein Rab-17 (212 aa).

Ser29 is subject to Phosphoserine. Residues Gly31, Lys32, Ser33, and Thr50 each contribute to the GTP site. Residues Ser33, Thr50, and Asp73 each coordinate Mg(2+). Residues 43–54 (DFKSILPTVGCA) carry the Switch 1 motif. Residues 75–91 (AGQEKYHSVCHLYFRGA) carry the Switch 2 motif. Gly76, Asn132, Lys133, Asp135, and Ala163 together coordinate GTP. 2 S-geranylgeranyl cysteine lipidation sites follow: Cys209 and Cys210.

This sequence belongs to the small GTPase superfamily. Rab family. It depends on Mg(2+) as a cofactor. In terms of tissue distribution, expressed in melanocytes (at protein level).

It localises to the recycling endosome membrane. The protein resides in the melanosome. Its subcellular location is the cell projection. The protein localises to the dendrite. The catalysed reaction is GTP + H2O = GDP + phosphate + H(+). Its activity is regulated as follows. Regulated by guanine nucleotide exchange factors (GEFs) which promote the exchange of bound GDP for free GTP. Regulated by GTPase activating proteins (GAPs) which increase the GTP hydrolysis activity. Inhibited by GDP dissociation inhibitors (GDIs). Its function is as follows. The small GTPases Rab are key regulators of intracellular membrane trafficking, from the formation of transport vesicles to their fusion with membranes. Rabs cycle between an inactive GDP-bound form and an active GTP-bound form that is able to recruit to membranes different set of downstream effectors directly responsible for vesicle formation, movement, tethering and fusion. RAB17 is involved in transcytosis, the directed movement of endocytosed material through the cell and its exocytosis from the plasma membrane at the opposite side. Mainly observed in epithelial cells, transcytosis mediates for instance, the transcellular transport of immunoglobulins from the basolateral surface to the apical surface. Most probably controls membrane trafficking through apical recycling endosomes in a post-endocytic step of transcytosis. Required for melanosome transport and release from melanocytes, it also regulates dendrite and dendritic spine development. May also play a role in cell migration. The polypeptide is Ras-related protein Rab-17 (Homo sapiens (Human)).